The primary structure comprises 290 residues: Elongation factor Ts (290 aa).

Residues 83–86 form an involved in Mg(2+) ion dislocation from EF-Tu region; it reads TDFV.

It belongs to the EF-Ts family.

Its subcellular location is the cytoplasm. Functionally, associates with the EF-Tu.GDP complex and induces the exchange of GDP to GTP. It remains bound to the aminoacyl-tRNA.EF-Tu.GTP complex up to the GTP hydrolysis stage on the ribosome. This is Elongation factor Ts (tsf) from Aquifex aeolicus (strain VF5).